The primary structure comprises 273 residues: Bis(5'-nucleosyl)-tetraphosphatase, symmetrical (273 aa).

It belongs to the Ap4A hydrolase family.

The enzyme catalyses P(1),P(4)-bis(5'-adenosyl) tetraphosphate + H2O = 2 ADP + 2 H(+). Functionally, hydrolyzes diadenosine 5',5'''-P1,P4-tetraphosphate to yield ADP. In Aeromonas salmonicida (strain A449), this protein is Bis(5'-nucleosyl)-tetraphosphatase, symmetrical.